The following is a 131-amino-acid chain: Steroid Delta-isomerase (131 aa).

Y16 acts as the Proton donor in catalysis. D40 serves as the catalytic Proton acceptor. Position 103 (D103) interacts with substrate.

As to quaternary structure, homodimer.

The enzyme catalyses a 3-oxo-Delta(5)-steroid = a 3-oxo-Delta(4)-steroid. The chain is Steroid Delta-isomerase (ksi) from Pseudomonas putida (Arthrobacter siderocapsulatus).